Here is a 346-residue protein sequence, read N- to C-terminus: Selenoprotein V (346 aa).

Disordered stretches follow at residues 1-40 (MNNQARTPAPSSARTSTSVRASTPTRTPTPLRTPTPVRTR) and 151-206 (LDPP…PGPT). Over residues 151–162 (LDPPPEPAPELP) the composition is skewed to pro residues. The cysteinyl-selenocysteine (Cys-Sec); redox-active cross-link spans 270–273 (CGLU). Sec-273 is a non-standard amino acid (selenocysteine).

This sequence belongs to the SelWTH family. In terms of processing, truncated SELENOV proteins produced by failed UGA/Sec decoding are ubiquitinated by the CRL2(APPBP2) complex, which recognizes the glycine (Gly) at the C-terminus of truncated SELENOV proteins. Testis specific.

Its function is as follows. May be involved in a redox-related process. In Homo sapiens (Human), this protein is Selenoprotein V.